A 561-amino-acid polypeptide reads, in one-letter code: Formate--tetrahydrofolate ligase (561 aa).

70–77 (TPAGEGKT) serves as a coordination point for ATP.

It belongs to the formate--tetrahydrofolate ligase family.

The enzyme catalyses (6S)-5,6,7,8-tetrahydrofolate + formate + ATP = (6R)-10-formyltetrahydrofolate + ADP + phosphate. It participates in one-carbon metabolism; tetrahydrofolate interconversion. In Pelagibacter ubique (strain HTCC1062), this protein is Formate--tetrahydrofolate ligase.